We begin with the raw amino-acid sequence, 947 residues long: DNA topoisomerase 1 (947 aa).

One can recognise a Toprim domain in the interval 16 to 140 (RRLVIVESPT…VKRMVFHEIT (125 aa)). Positions 22 and 109 each coordinate Mg(2+). In terms of domain architecture, Topo IA-type catalytic spans 155 to 614 (DIDLVDAQET…FYFGGNHGVS (460 aa)). The tract at residues 189-194 (SAGRVQ) is interaction with DNA. Tyr-343 (O-(5'-phospho-DNA)-tyrosine intermediate) is an active-site residue. Disordered regions lie at residues 733-771 (VLPKHDDDYGAADQGTKKTKKGRRASASQGPKPRTGSLL), 846-888 (KRAG…GETN), and 910-947 (ADRRARGPVKRPAKKARKVPAKKAARLAPARGISQSPR). Positions 915–934 (RGPVKRPAKKARKVPAKKAA) are enriched in basic residues.

Belongs to the type IA topoisomerase family. Monomer. Mg(2+) serves as cofactor.

The enzyme catalyses ATP-independent breakage of single-stranded DNA, followed by passage and rejoining.. In terms of biological role, releases the supercoiling and torsional tension of DNA, which is introduced during the DNA replication and transcription, by transiently cleaving and rejoining one strand of the DNA duplex. Introduces a single-strand break via transesterification at a target site in duplex DNA. The scissile phosphodiester is attacked by the catalytic tyrosine of the enzyme, resulting in the formation of a DNA-(5'-phosphotyrosyl)-enzyme intermediate and the expulsion of a 3'-OH DNA strand. The free DNA strand then undergoes passage around the unbroken strand, thus removing DNA supercoils. Finally, in the religation step, the DNA 3'-OH attacks the covalent intermediate to expel the active-site tyrosine and restore the DNA phosphodiester backbone. In Mycobacterium leprae (strain TN), this protein is DNA topoisomerase 1.